The sequence spans 102 residues: MANKKIRIRLKAYEHRTLDTAAAKIVETATRTGAQVAGPVPLPTERSFYTIIRATHKYKDSREQFEMRTHKRLIDIINPTQKTVDALMKLDLPSGVNVEIKL.

It belongs to the universal ribosomal protein uS10 family. In terms of assembly, part of the 30S ribosomal subunit.

Its function is as follows. Involved in the binding of tRNA to the ribosomes. This chain is Small ribosomal subunit protein uS10, found in Streptococcus suis (strain 98HAH33).